The primary structure comprises 255 residues: Type III pantothenate kinase (255 aa).

6–13 (DVGNTNTV) serves as a coordination point for ATP. Residues tyrosine 100 and 107 to 110 (GADR) contribute to the substrate site. Aspartate 109 acts as the Proton acceptor in catalysis. Aspartate 129 provides a ligand contact to K(+). Threonine 132 serves as a coordination point for ATP. Threonine 184 is a binding site for substrate.

Belongs to the type III pantothenate kinase family. Homodimer. It depends on NH4(+) as a cofactor. K(+) serves as cofactor.

It is found in the cytoplasm. The enzyme catalyses (R)-pantothenate + ATP = (R)-4'-phosphopantothenate + ADP + H(+). It functions in the pathway cofactor biosynthesis; coenzyme A biosynthesis; CoA from (R)-pantothenate: step 1/5. In terms of biological role, catalyzes the phosphorylation of pantothenate (Pan), the first step in CoA biosynthesis. This chain is Type III pantothenate kinase, found in Syntrophotalea carbinolica (strain DSM 2380 / NBRC 103641 / GraBd1) (Pelobacter carbinolicus).